The primary structure comprises 359 residues: NF-kappa-B inhibitor beta (359 aa).

Residues S19 and S23 each carry the phosphoserine; by RPS6KA1 modification. ANK repeat units lie at residues 57-86 (DGDT…GTEY), 93-122 (LGQT…GVLV), and 126-155 (GGHT…SHPR). The tract at residues 153 to 194 (HPRDASDTYLTQSQDCTPDTSHAPAAVDSQPNPENEEEPRDE) is disordered. The segment covering 160–172 (TYLTQSQDCTPDT) has biased composition (polar residues). 3 ANK repeats span residues 206-235 (DGHT…DLNK), 240-269 (CGRT…DPTA), and 273-302 (GGRT…PEPE). The interval 298 to 359 (APEPEDEDDK…KPLPDDPNPA (62 aa)) is disordered. Phosphoserine is present on residues S313 and S318. The span at 318–331 (SDSDNRDEGDEYDD) shows a compositional bias: acidic residues. The segment covering 344–359 (PPSPASKPLPDDPNPA) has biased composition (pro residues).

The protein belongs to the NF-kappa-B inhibitor family. In terms of assembly, interacts with THRB (via ligand-binding domain). Interacts with RELA and REL. Interacts with COMMD1. Interacts with inhibitor kappa B-interacting Ras-like NKIRAS1 and NKIRAS2. In terms of processing, phosphorylated by RPS6KA1; followed by degradation. Interaction with NKIRAS1 and NKIRAS2 probably prevents phosphorylation. In terms of tissue distribution, highly expressed in testis followed by spleen.

The protein resides in the cytoplasm. Its subcellular location is the nucleus. Functionally, inhibits NF-kappa-B by complexing with and trapping it in the cytoplasm. However, the unphosphorylated form resynthesized after cell stimulation is able to bind NF-kappa-B allowing its transport to the nucleus and protecting it to further NFKBIA-dependent inactivation. Association with inhibitor kappa B-interacting NKIRAS1 and NKIRAS2 prevent its phosphorylation rendering it more resistant to degradation, explaining its slower degradation. In Mus musculus (Mouse), this protein is NF-kappa-B inhibitor beta (Nfkbib).